The chain runs to 258 residues: Imidazole glycerol phosphate synthase subunit HisF (258 aa).

Catalysis depends on residues aspartate 11 and aspartate 130.

This sequence belongs to the HisA/HisF family. As to quaternary structure, heterodimer of HisH and HisF.

It localises to the cytoplasm. It carries out the reaction 5-[(5-phospho-1-deoxy-D-ribulos-1-ylimino)methylamino]-1-(5-phospho-beta-D-ribosyl)imidazole-4-carboxamide + L-glutamine = D-erythro-1-(imidazol-4-yl)glycerol 3-phosphate + 5-amino-1-(5-phospho-beta-D-ribosyl)imidazole-4-carboxamide + L-glutamate + H(+). Its pathway is amino-acid biosynthesis; L-histidine biosynthesis; L-histidine from 5-phospho-alpha-D-ribose 1-diphosphate: step 5/9. Functionally, IGPS catalyzes the conversion of PRFAR and glutamine to IGP, AICAR and glutamate. The HisF subunit catalyzes the cyclization activity that produces IGP and AICAR from PRFAR using the ammonia provided by the HisH subunit. The protein is Imidazole glycerol phosphate synthase subunit HisF of Methylobacterium nodulans (strain LMG 21967 / CNCM I-2342 / ORS 2060).